Here is a 701-residue protein sequence, read N- to C-terminus: Elongation factor G (701 aa).

Residues 11–287 enclose the tr-type G domain; it reads TKVRNIGIMA…AVIDYLPSPL (277 aa). Residues 20–27, 84–88, and 138–141 each bind GTP; these read AHIDAGKT, DTPGH, and NKMD.

This sequence belongs to the TRAFAC class translation factor GTPase superfamily. Classic translation factor GTPase family. EF-G/EF-2 subfamily.

The protein resides in the cytoplasm. Functionally, catalyzes the GTP-dependent ribosomal translocation step during translation elongation. During this step, the ribosome changes from the pre-translocational (PRE) to the post-translocational (POST) state as the newly formed A-site-bound peptidyl-tRNA and P-site-bound deacylated tRNA move to the P and E sites, respectively. Catalyzes the coordinated movement of the two tRNA molecules, the mRNA and conformational changes in the ribosome. The sequence is that of Elongation factor G from Mycobacterium ulcerans (strain Agy99).